Reading from the N-terminus, the 145-residue chain is Small ribosomal subunit protein uS9 (145 aa).

A compositionally biased stretch (polar residues) spans 1 to 13 (MATDQHSNKSNVS). The interval 1–24 (MATDQHSNKSNVSAARKPLSPSPT) is disordered.

It belongs to the universal ribosomal protein uS9 family.

The protein resides in the cytoplasm. This is Small ribosomal subunit protein uS9 (RPS16) from Lupinus polyphyllus (Large-leaved lupine).